Consider the following 198-residue polypeptide: Dual specificity protein phosphatase 14 (198 aa).

The 142-residue stretch at 26 to 167 (GIAQITSSLF…LIDYERQLFG (142 aa)) folds into the Tyrosine-protein phosphatase domain. Cys111 (phosphocysteine intermediate) is an active-site residue.

Belongs to the protein-tyrosine phosphatase family. Non-receptor class dual specificity subfamily. As to quaternary structure, interacts with CD28.

The enzyme catalyses O-phospho-L-tyrosyl-[protein] + H2O = L-tyrosyl-[protein] + phosphate. It catalyses the reaction O-phospho-L-seryl-[protein] + H2O = L-seryl-[protein] + phosphate. The catalysed reaction is O-phospho-L-threonyl-[protein] + H2O = L-threonyl-[protein] + phosphate. In terms of biological role, involved in the inactivation of MAP kinases. Dephosphorylates ERK, JNK and p38 MAP-kinases. Plays a negative role in TCR signaling by dephosphorylating MAP3K7 adapter TAB1 leading to its inactivation. This is Dual specificity protein phosphatase 14 (DUSP14) from Bos taurus (Bovine).